A 135-amino-acid polypeptide reads, in one-letter code: Auxin-responsive protein SAUR66 (135 aa).

The protein belongs to the ARG7 family.

It localises to the cell membrane. In terms of biological role, may promote auxin-stimulated organ elongation, such as hypocotyls, stamen filaments and petals. In Arabidopsis thaliana (Mouse-ear cress), this protein is Auxin-responsive protein SAUR66.